The sequence spans 981 residues: Ubiquitin carboxyl-terminal hydrolase 15 (981 aa).

Position 2 is an N-acetylalanine (Ala2). The mediates interaction with SART3 stretch occupies residues 2–223 (AEGGAADLDT…KNEDGTWPRG (222 aa)). Residues 7–118 (ADLDTQRSDI…GQEPIARKVV (112 aa)) enclose the DUSP domain. The disordered stretch occupies residues 216 to 237 (EDGTWPRGPSTPKSPGASNFST). Thr226 is modified (phosphothreonine). A compositionally biased stretch (polar residues) spans 226-237 (TPKSPGASNFST). Phosphoserine occurs at positions 229 and 242. A USP domain is found at 289–933 (CGLSNLGNTC…AAYVLFYQRQ (645 aa)). Cys298 (nucleophile) is an active-site residue. Thr602 bears the Phosphothreonine mark. The disordered stretch occupies residues 629-694 (GSLHCCKDQN…GGDNDSENGL (66 aa)). The span at 656–673 (METDEPDDESSQDQELPS) shows a compositional bias: acidic residues. The active-site Proton acceptor is the His891. The interval 952–981 (SAATGIPLESDEDSNDNDNDIENENCMHTN) is disordered. Over residues 960 to 974 (ESDEDSNDNDNDIEN) the composition is skewed to acidic residues. Ser961 and Ser965 each carry phosphoserine.

Belongs to the peptidase C19 family. A homodimer structure has been reported; however it is unclear whether the protein form a homodimer in vivo. Identified in a complex with the COP9 signalosome complex (CSN). Interacts with SMAD1, SMAD2 and SMAD3; the interaction is direct. Forms a complex with SMURF2 and SMAD7. Interacts with TGFBR1. Interacts with SART3; the interaction is direct. May interact with RNF20 and RNF40. May interact with PRKN. Interacts with INCA1. As to quaternary structure, (Microbial infection) Interacts with human papillomavirus type 16 protein E6. Post-translationally, phosphorylated. Phosphorylation protects against ubiquitination and subsequent degradation by the proteasome. Ubiquitinated, leading to degradation by the proteasome. Expressed in skeletal muscle, kidney, heart, placenta, liver, thymus, lung, and ovary, with little or no expression in other tissues.

It is found in the cytoplasm. Its subcellular location is the nucleus. The protein resides in the mitochondrion. The catalysed reaction is Thiol-dependent hydrolysis of ester, thioester, amide, peptide and isopeptide bonds formed by the C-terminal Gly of ubiquitin (a 76-residue protein attached to proteins as an intracellular targeting signal).. Its function is as follows. Hydrolase that removes conjugated ubiquitin from target proteins and regulates various pathways such as the TGF-beta receptor signaling, NF-kappa-B and RNF41/NRDP1-PRKN pathways. Acts as a key regulator of TGF-beta receptor signaling pathway, but the precise mechanism is still unclear: according to a report, acts by promoting deubiquitination of monoubiquitinated R-SMADs (SMAD1, SMAD2 and/or SMAD3), thereby alleviating inhibition of R-SMADs and promoting activation of TGF-beta target genes. According to another reports, regulates the TGF-beta receptor signaling pathway by mediating deubiquitination and stabilization of TGFBR1, leading to an enhanced TGF-beta signal. Able to mediate deubiquitination of monoubiquitinated substrates, 'Lys-27'-, 'Lys-48'- and 'Lys-63'-linked polyubiquitin chains. May also regulate gene expression and/or DNA repair through the deubiquitination of histone H2B. Acts as an inhibitor of mitophagy by counteracting the action of parkin (PRKN): hydrolyzes cleavage of 'Lys-48'- and 'Lys-63'-linked polyubiquitin chains attached by parkin on target proteins such as MFN2, thereby reducing parkin's ability to drive mitophagy. Acts as an associated component of COP9 signalosome complex (CSN) and regulates different pathways via this association: regulates NF-kappa-B by mediating deubiquitination of NFKBIA and deubiquitinates substrates bound to VCP. Involved in endosome organization by mediating deubiquitination of SQSTM1: ubiquitinated SQSTM1 forms a molecular bridge that restrains cognate vesicles in the perinuclear region and its deubiquitination releases target vesicles for fast transport into the cell periphery. Acts as a negative regulator of antifungal immunity by mediating 'Lys-27'-linked deubiquitination of CARD9, thereby inactivating CARD9. In terms of biological role, (Microbial infection) Protects APC and human papillomavirus type 16 protein E6 against degradation via the ubiquitin proteasome pathway. The polypeptide is Ubiquitin carboxyl-terminal hydrolase 15 (Homo sapiens (Human)).